Here is a 263-residue protein sequence, read N- to C-terminus: Phosphoinositide-3-kinase-interacting protein 1 (263 aa).

The first 21 residues, 1–21, serve as a signal peptide directing secretion; it reads MLLAWVQAFLVSNMLLAEAYG. Residues 22–168 are Extracellular-facing; the sequence is SGGCFWDNGH…NSKEKKDLGT (147 aa). The Kringle domain occupies 24–101; sequence GCFWDNGHLY…EKRPCENLSC (78 aa). Cystine bridges form between C25–C101, C46–C82, and C70–C96. N-linked (GlcNAc...) asparagine glycosylation is present at N98. The chain crosses the membrane as a helical span at residues 169-189; that stretch reads LGYVLGITMMVIIVAIGAGII. Topologically, residues 190 to 263 are cytoplasmic; sequence LGYSYKRGKD…LMGQAGTPGA (74 aa). Over residues 242–251 the composition is skewed to polar residues; the sequence is QTPVDPQEGS. The segment at 242-263 is disordered; sequence QTPVDPQEGSTPLMGQAGTPGA.

The protein localises to the cell membrane. Its function is as follows. Negative regulator of hepatic phosphatidylinositol 3-kinase (PI3K) activity. The protein is Phosphoinositide-3-kinase-interacting protein 1 (PIK3IP1) of Pongo abelii (Sumatran orangutan).